Here is a 141-residue protein sequence, read N- to C-terminus: uncharacterized protein (141 aa).

The disordered stretch occupies residues 1 to 101 (FRGRAPRPLV…PDPGRSRRAT (101 aa)). Residues 27–70 (QVRDCGREGDLRAGKAADRRLPRARETCSRFGEGVRQKDVHKGP) show a composition bias toward basic and acidic residues.

This is an uncharacterized protein from Dhori virus (strain Indian/1313/61) (Dho).